A 393-amino-acid polypeptide reads, in one-letter code: 4-hydroxyphenylpyruvate dioxygenase (393 aa).

Threonine 2 carries the post-translational modification N-acetylthreonine. VOC domains are found at residues histidine 18–lysine 149 and isoleucine 180–lysine 338. Lysine 132 carries the post-translational modification N6-succinyllysine. Histidine 183 provides a ligand contact to Fe cation. Serine 211, serine 226, and serine 250 each carry phosphoserine. Residues histidine 266 and glutamate 349 each coordinate Fe cation.

This sequence belongs to the 4HPPD family. Homodimer. Fe cation is required as a cofactor.

It is found in the cytoplasm. The protein resides in the endoplasmic reticulum membrane. The protein localises to the golgi apparatus membrane. The enzyme catalyses 3-(4-hydroxyphenyl)pyruvate + O2 = homogentisate + CO2. Its pathway is amino-acid degradation; L-phenylalanine degradation; acetoacetate and fumarate from L-phenylalanine: step 3/6. Functionally, catalyzes the conversion of 4-hydroxyphenylpyruvic acid to homogentisic acid, one of the steps in tyrosine catabolism. The protein is 4-hydroxyphenylpyruvate dioxygenase (Hpd) of Rattus norvegicus (Rat).